We begin with the raw amino-acid sequence, 258 residues long: Cholera enterotoxin subunit A (258 aa).

The first 18 residues, 1–18, serve as a signal peptide directing secretion; it reads MVKIIFVFFIFLSSFSYA. NAD(+)-binding positions include 25-28 and 41-43; these read RADS and MPR. The active site involves glutamate 130. A disulfide bridge connects residues cysteine 205 and cysteine 217.

It belongs to the enterotoxin A family. The holotoxin (choleragen) consists of a pentameric ring of B subunits whose central pore is occupied by the A subunit. The A subunit contains two chains, A1 and A2, linked by a disulfide bridge. Interaction with the host protein ARF6 causes a conformation change so that the enterotoxin subunit A1 can bind NAD and catalyze the ADP-ribosylation of the host Gs alpha.

Its function is as follows. The A1 chain catalyzes the ADP-ribosylation of Gs alpha, a GTP-binding regulatory protein, to activate the adenylate cyclase. This leads to an overproduction of cAMP and eventually to a hypersecretion of chloride and bicarbonate followed by water, resulting in the characteristic cholera stool. The A2 chain tethers A1 to the pentameric ring. This chain is Cholera enterotoxin subunit A (ctxA), found in Vibrio cholerae serotype O1 (strain ATCC 39315 / El Tor Inaba N16961).